The primary structure comprises 300 residues: Formylmethanofuran--tetrahydromethanopterin formyltransferase-like protein (300 aa).

It belongs to the FTR family.

The polypeptide is Formylmethanofuran--tetrahydromethanopterin formyltransferase-like protein (Methanopyrus kandleri (strain AV19 / DSM 6324 / JCM 9639 / NBRC 100938)).